Here is a 158-residue protein sequence, read N- to C-terminus: NAD(P)H-quinone oxidoreductase subunit J, chloroplastic (158 aa).

This sequence belongs to the complex I 30 kDa subunit family. As to quaternary structure, NDH is composed of at least 16 different subunits, 5 of which are encoded in the nucleus.

The protein localises to the plastid. It localises to the chloroplast thylakoid membrane. The enzyme catalyses a plastoquinone + NADH + (n+1) H(+)(in) = a plastoquinol + NAD(+) + n H(+)(out). The catalysed reaction is a plastoquinone + NADPH + (n+1) H(+)(in) = a plastoquinol + NADP(+) + n H(+)(out). Functionally, NDH shuttles electrons from NAD(P)H:plastoquinone, via FMN and iron-sulfur (Fe-S) centers, to quinones in the photosynthetic chain and possibly in a chloroplast respiratory chain. The immediate electron acceptor for the enzyme in this species is believed to be plastoquinone. Couples the redox reaction to proton translocation, and thus conserves the redox energy in a proton gradient. The chain is NAD(P)H-quinone oxidoreductase subunit J, chloroplastic from Amborella trichopoda.